The following is a 208-amino-acid chain: UPF0637 protein Bcer98_2662 (208 aa).

It belongs to the UPF0637 family.

The protein is UPF0637 protein Bcer98_2662 of Bacillus cytotoxicus (strain DSM 22905 / CIP 110041 / 391-98 / NVH 391-98).